The sequence spans 313 residues: Potassium channel subfamily K member 6 (313 aa).

Residues 1–4 (MRRG) lie on the Cytoplasmic side of the membrane. The chain crosses the membrane as a helical span at residues 5–25 (ALLAGALAAYAAYLVLGALLV). 2 N-linked (GlcNAc...) asparagine glycosylation sites follow: N79 and N85. Positions 90–115 (AWDFASALFFASTLITTVGYGYTTPL) form an intramembrane region, pore-forming. The K(+) site is built by T106, V107, G108, and Y109. The tract at residues 106–111 (TVGYGY) is selectivity filter 1. The chain crosses the membrane as a helical span at residues 121-141 (AFSIAFALLGVPTTMLLLTAS). Residues 142-172 (AQRLSLLLTHVPLSWLSMRWGWDPRRAACWH) are Cytoplasmic-facing. The helical transmembrane segment at 173–193 (LVALLGVVVTVCFLVPAVIFA) threads the bilayer. The segment at residues 199 to 223 (WSFLDAFYFCFISLSTIGLGDYVPG) is an intramembrane region (pore-forming). Positions 214, 215, and 216 each coordinate K(+). A selectivity filter 2 region spans residues 214–219 (TIGLGD). The helical transmembrane segment at 236–256 (VLVTVYLFLGLVAMVLVLQTF) threads the bilayer. Residues 257–313 (RHVSDLHGLTELILLPPPCPASFNADEDDRVDILGPQPESHQQLSASSHTDYASIPR) lie on the Cytoplasmic side of the membrane. Residues 282–290 (DEDDRVDIL) carry the Lysosomal targeting signal motif. Residues 288 to 313 (DILGPQPESHQQLSASSHTDYASIPR) are disordered. Polar residues predominate over residues 295 to 307 (ESHQQLSASSHTD). Residues 308 to 312 (YASIP) carry the Lysosomal targeting signal motif.

The protein belongs to the two pore domain potassium channel (TC 1.A.1.8) family. In terms of assembly, homodimer; disulfide-linked. N-glycosylation is necessary for targeting to lysosomes. Widespread expression, detected in all tissues tested except for skeletal muscle. Strongest expression in placenta, pancreas, heart, colon and spleen, lower levels detected in peripheral blood leukocytes, lung, liver, kidney and thymus. Lowest expression detected in brain.

It localises to the late endosome membrane. Its subcellular location is the lysosome membrane. The catalysed reaction is K(+)(in) = K(+)(out). In terms of biological role, k(+) channel that conducts outward rectifying currents at the membranes of the endolysosomal system. Active in lysosomes where it regulates lysosome numbers and size. In macrophages, enables K(+) efflux coupled to ATP-induced NLRP3 inflammasome activation upon bacterial infection. Cooperates with ATP-gated P2RX7 channels to activate NLRP3 inflammasome, with P2RX7 conducting Ca(2+) and Na(+) influx that sets the membrane potential for K(+) efflux. Does not display channel activity. The protein is Potassium channel subfamily K member 6 of Homo sapiens (Human).